The following is a 61-amino-acid chain: Small ribosomal subunit protein uS14 (61 aa).

Zn(2+)-binding residues include Cys24, Cys27, Cys40, and Cys43.

The protein belongs to the universal ribosomal protein uS14 family. Zinc-binding uS14 subfamily. Part of the 30S ribosomal subunit. Contacts proteins S3 and S10. Zn(2+) serves as cofactor.

Functionally, binds 16S rRNA, required for the assembly of 30S particles and may also be responsible for determining the conformation of the 16S rRNA at the A site. This Syntrophotalea carbinolica (strain DSM 2380 / NBRC 103641 / GraBd1) (Pelobacter carbinolicus) protein is Small ribosomal subunit protein uS14.